Consider the following 654-residue polypeptide: Chaperone protein DnaK (654 aa).

Position 205 is a phosphothreonine; by autocatalysis (threonine 205). Residues 592-654 (ELERQMQQIG…EVEILDDKKP (63 aa)) are disordered. Residues 608–621 (AGQSETQSTGPGSY) show a composition bias toward polar residues. A compositionally biased stretch (low complexity) spans 622-636 (QESSNQSSQHQTNNN).

Belongs to the heat shock protein 70 family.

Acts as a chaperone. In Protochlamydia amoebophila (strain UWE25), this protein is Chaperone protein DnaK.